Here is an 80-residue protein sequence, read N- to C-terminus: Large ribosomal subunit protein uL29 (80 aa).

It belongs to the universal ribosomal protein uL29 family.

The sequence is that of Large ribosomal subunit protein uL29 (rpmC) from Mycobacterium leprae (strain TN).